We begin with the raw amino-acid sequence, 398 residues long: Putative FBD-associated F-box protein At5g56700 (398 aa).

One can recognise an F-box domain in the interval 1–47 (MAKISDLSDELLVKILSFLPTKEAVSTSCLSKQWEFLWMWLSKLEFY). An FBD domain is found at 340–388 (WKNNKSSVPKCLLESLETFEFAGYIGTPEERDFLSYIFKHARCLKSSSI).

The chain is Putative FBD-associated F-box protein At5g56700 from Arabidopsis thaliana (Mouse-ear cress).